The chain runs to 519 residues: Cytochrome P450 monooxygenase AtmP (519 aa).

The helical transmembrane segment at 21-41 threads the bilayer; sequence SMLLVVTLVILFLWFIIPSPV. Heme is bound at residue Cys-457.

It belongs to the cytochrome P450 family. Heme serves as cofactor.

The protein resides in the membrane. It participates in secondary metabolite biosynthesis. In terms of biological role, cytochrome P450 monooxygenase; part of the ATM2 gene cluster that mediates the biosynthesis of aflatrem, a tremorgenic mycotoxin with acute neurotoxic effects. Synthesis of geranylgeranyl diphosphate (GGPP) by AtmG (a GGPP synthase) precedes condensation of GGPP with indole 3-glycerol phosphate, followed by epoxidation and cyclization by AtmM (a FAD-dependent monooxygenase) and AtmC (a prenyltransferase) to produce paspaline. AtmB is also essential for paspaline production, but its exact role has not been identified yet. AtmP, a cytochrome P450 monooxygenase, subsequently converts paspaline to 13-desoxypaxilline via PC-M6 by removal of the C-30 methyl group and oxidation at C-10. AtmQ, a cytochrome P450 monooxygenase, then catalyzes the oxidation of 13-desoxypaxilline, first at C-7 to produce paspalicine and then at C-13 to form paspalinine. Finally, AtmD prenylates paspalinine to form aflatrem. The polypeptide is Cytochrome P450 monooxygenase AtmP (Aspergillus flavus).